A 225-amino-acid polypeptide reads, in one-letter code: MTPRLRLQPESVGIGMTSQRVRDRLVERLREAGIHDEATLNAMQTVPRHLFIDEALASRAYEDTALPIGHGQTISQPWVVARMTEAVLQVTPTKVLEVGTGSGYQGAILAALGLEVYTVERIGDLLRQARKRFRHLGMNVRSKHDDGRIGWHEHGPYDAIVVTAAAPALVDALVDQLAVGGRLVAPVGGASSQSLVQLTRGADGTIEQQVLAPVTFVPLLSGMLD.

The active site involves serine 75.

It belongs to the methyltransferase superfamily. L-isoaspartyl/D-aspartyl protein methyltransferase family.

The protein resides in the cytoplasm. It carries out the reaction [protein]-L-isoaspartate + S-adenosyl-L-methionine = [protein]-L-isoaspartate alpha-methyl ester + S-adenosyl-L-homocysteine. Its function is as follows. Catalyzes the methyl esterification of L-isoaspartyl residues in peptides and proteins that result from spontaneous decomposition of normal L-aspartyl and L-asparaginyl residues. It plays a role in the repair and/or degradation of damaged proteins. The polypeptide is Protein-L-isoaspartate O-methyltransferase (Xanthomonas oryzae pv. oryzae (strain PXO99A)).